Here is a 564-residue protein sequence, read N- to C-terminus: Esterase FE4 (564 aa).

The first 23 residues, 1–23, serve as a signal peptide directing secretion; it reads MKNTCGILLNLFLFIGCFLTCSA. Asn-81 carries N-linked (GlcNAc...) asparagine glycosylation. Cys-89 and Cys-106 are oxidised to a cystine. Ser-214 acts as the Acyl-ester intermediate in catalysis. A disulfide bond links Cys-266 and Cys-277. Asn-269 carries N-linked (GlcNAc...) asparagine glycosylation. Catalysis depends on Glu-339, which acts as the Charge relay system. N-linked (GlcNAc...) asparagine glycans are attached at residues Asn-371, Asn-404, and Asn-443. The active-site Charge relay system is the His-463.

It belongs to the type-B carboxylesterase/lipase family.

It carries out the reaction a carboxylic ester + H2O = an alcohol + a carboxylate + H(+). In terms of biological role, overproduction of nonspecific esterases is a common mechanism of resistance to organophosphate insecticides. The polypeptide is Esterase FE4 (Myzus persicae (Green peach aphid)).